A 407-amino-acid polypeptide reads, in one-letter code: FK506-binding protein 3 (407 aa).

3 disordered regions span residues 46-136 (RIEG…DDEG), 191-223 (DEDE…EDEV), and 236-297 (QDDE…PKLV). Composition is skewed to acidic residues over residues 65 to 88 (NFDD…EVSA) and 103 to 136 (DGLD…DDEG). Acidic residues predominate over residues 236–252 (QDDEDDEDDEDEEEEPV). Basic and acidic residues predominate over residues 253–272 (VEPKKILKRAAEEKKQEKAA). One can recognise a PPIase FKBP-type domain in the interval 321–407 (GSKVGVRYVG…TFDVKVVNIK (87 aa)).

Belongs to the FKBP-type PPIase family. FKBP3/4 subfamily.

It localises to the nucleus. The protein localises to the nucleolus. It carries out the reaction [protein]-peptidylproline (omega=180) = [protein]-peptidylproline (omega=0). Inhibited by both FK506 and rapamycin. In terms of biological role, PPIases accelerate the folding of proteins. It catalyzes the cis-trans isomerization of proline imidic peptide bonds in oligopeptides. This is FK506-binding protein 3 (FPR3) from Yarrowia lipolytica (strain CLIB 122 / E 150) (Yeast).